We begin with the raw amino-acid sequence, 520 residues long: Cytochrome P450 72A397 (520 aa).

Residues alanine 14–valine 34 traverse the membrane as a helical segment. A heme-binding site is contributed by cysteine 468.

This sequence belongs to the cytochrome P450 family. Requires heme as cofactor.

Its subcellular location is the membrane. It catalyses the reaction oleanolate + reduced [NADPH--hemoprotein reductase] + O2 = hederagenin + oxidized [NADPH--hemoprotein reductase] + H2O + H(+). Functionally, catalyzes the oxidation of oleanolate at the C-23 position to form hederagenin. The sequence is that of Cytochrome P450 72A397 from Kalopanax septemlobus (Castor aralia).